Here is an 878-residue protein sequence, read N- to C-terminus: Valine--tRNA ligase (878 aa).

The 'HIGH' region signature appears at 43–53 (PYPTGRLHLGH). The 'KMSKS' region motif lies at 527–531 (KMSKS). K530 is an ATP binding site.

It belongs to the class-I aminoacyl-tRNA synthetase family. ValS type 2 subfamily.

The protein localises to the cytoplasm. It carries out the reaction tRNA(Val) + L-valine + ATP = L-valyl-tRNA(Val) + AMP + diphosphate. In terms of biological role, catalyzes the attachment of valine to tRNA(Val). As ValRS can inadvertently accommodate and process structurally similar amino acids such as threonine, to avoid such errors, it has a 'posttransfer' editing activity that hydrolyzes mischarged Thr-tRNA(Val) in a tRNA-dependent manner. This chain is Valine--tRNA ligase, found in Methanocaldococcus jannaschii (strain ATCC 43067 / DSM 2661 / JAL-1 / JCM 10045 / NBRC 100440) (Methanococcus jannaschii).